A 513-amino-acid polypeptide reads, in one-letter code: MAKFEGYSEKQKSRQQYFVYPLLFQEYIYAFAHDYVLNGSEPVEIFGCNNKKFSSLLVKRLIIRMYQQNFWINSVNHPNQDRLLDHSNHFYSEFYSQILSEGFAIVVEIPFSLGQLSCPEEKEIPKFQNLRSIHSIFPFLEDKFLHLHYLSHIEIPYPIHFEILVQLLEYRIKDVPSLHLLRFFLNYYSNWNSLITSMKSIFLFSKENKRLSRFLYNSYVSEYEFFLLFLRKQSSCLRLTSSGTFLERIHFSRKMEHFGVMYPGFFRKTIWFFMDPLMHYVRYQRKVILASKGTLLFQKKWKSYLVNFSQYFFSFWTQPQRIRLNQLTNSCFDFLGYRSSVPINTFLVRNQMLENFFLIDTRMKKFDTTAPATPLIGSLSKAQFCTGSGHPISKPIWTDLSDWDILDRFGRICRNLFHYHSGSSKKRTLYRLKYILRLSCARTLARKHKSTVRTFMQRLGSVFLEEFFTEEEQVFSLMFAKTTHFSFHGSHSERIWYLDIIRIDDLVNPLTLN.

Belongs to the intron maturase 2 family. MatK subfamily.

The protein localises to the plastid. Its subcellular location is the chloroplast. Usually encoded in the trnK tRNA gene intron. Probably assists in splicing its own and other chloroplast group II introns. This is Maturase K from Astrebla lappacea (Curly Mitchell grass).